A 165-amino-acid polypeptide reads, in one-letter code: SsrA-binding protein (165 aa).

A compositionally biased stretch (basic and acidic residues) spans 135-158; that stretch reads QAHDKRQDMARRDAQREVTRELGR. The disordered stretch occupies residues 135-165; that stretch reads QAHDKRQDMARRDAQREVTRELGRRVKGMTS.

This sequence belongs to the SmpB family.

It localises to the cytoplasm. In terms of biological role, required for rescue of stalled ribosomes mediated by trans-translation. Binds to transfer-messenger RNA (tmRNA), required for stable association of tmRNA with ribosomes. tmRNA and SmpB together mimic tRNA shape, replacing the anticodon stem-loop with SmpB. tmRNA is encoded by the ssrA gene; the 2 termini fold to resemble tRNA(Ala) and it encodes a 'tag peptide', a short internal open reading frame. During trans-translation Ala-aminoacylated tmRNA acts like a tRNA, entering the A-site of stalled ribosomes, displacing the stalled mRNA. The ribosome then switches to translate the ORF on the tmRNA; the nascent peptide is terminated with the 'tag peptide' encoded by the tmRNA and targeted for degradation. The ribosome is freed to recommence translation, which seems to be the essential function of trans-translation. This Mycolicibacterium vanbaalenii (strain DSM 7251 / JCM 13017 / BCRC 16820 / KCTC 9966 / NRRL B-24157 / PYR-1) (Mycobacterium vanbaalenii) protein is SsrA-binding protein.